The chain runs to 216 residues: Sperm microtubule inner protein 8 (216 aa).

In terms of assembly, microtubule inner protein component of sperm flagellar doublet microtubules. As to expression, expressed in sperm.

It is found in the cytoplasm. The protein resides in the cytoskeleton. It localises to the flagellum axoneme. Microtubule inner protein (MIP) part of the dynein-decorated doublet microtubules (DMTs) in flagellum axoneme. May serve to reinforce and thus stabilize the microtubule structure in the sperm flagella. The chain is Sperm microtubule inner protein 8 (SPMIP8) from Bos taurus (Bovine).